The following is a 348-amino-acid chain: Probable tRNA pseudouridine synthase B (348 aa).

The active-site Nucleophile is D93. Residues 260–335 (LKKIYILDSA…IAVDIERVFM (76 aa)) form the PUA domain.

It belongs to the pseudouridine synthase TruB family. Type 2 subfamily.

The enzyme catalyses uridine(55) in tRNA = pseudouridine(55) in tRNA. Its function is as follows. Could be responsible for synthesis of pseudouridine from uracil-55 in the psi GC loop of transfer RNAs. This chain is Probable tRNA pseudouridine synthase B, found in Nanoarchaeum equitans (strain Kin4-M).